Here is a 235-residue protein sequence, read N- to C-terminus: RING-H2 finger protein ATL17 (235 aa).

A helical membrane pass occupies residues 1–21; it reads MLTTTILILLIVILMVSLHLY. Residues 76–118 form an RING-type; atypical zinc finger; it reads CSVCLSEFKDNESGRVMPNCKHTFHVHCIDMWFHSHSSCPLCR. Residues 143 to 167 form a disordered region; sequence VYGDTNHHEGTETTGDSVPEDSQRK.

It belongs to the RING-type zinc finger family. ATL subfamily.

It localises to the membrane. The catalysed reaction is S-ubiquitinyl-[E2 ubiquitin-conjugating enzyme]-L-cysteine + [acceptor protein]-L-lysine = [E2 ubiquitin-conjugating enzyme]-L-cysteine + N(6)-ubiquitinyl-[acceptor protein]-L-lysine.. It participates in protein modification; protein ubiquitination. In terms of biological role, may be involved in the early steps of the plant defense signaling pathway. The protein is RING-H2 finger protein ATL17 (ATL17) of Arabidopsis thaliana (Mouse-ear cress).